The following is a 54-amino-acid chain: MLIKSIISLNLISSSNNSNISKDDKLKIISYDLNKNSNTSPKYVCIFTRPLYNC.

This is an uncharacterized protein from Dictyostelium discoideum (Social amoeba).